Reading from the N-terminus, the 387-residue chain is BarH-like 2 homeobox protein (387 aa).

3 disordered regions span residues 1–145 (MTME…FLIK), 157–240 (CAPY…TAFS), and 367–387 (PGGQPALNPLSSPIPGTPHPR). The span at 7–24 (SGSSFGIDTILSSASSGS) shows a compositional bias: polar residues. A compositionally biased stretch (low complexity) spans 100–113 (APTQSLQPLPQQQQ). A compositionally biased stretch (pro residues) spans 114–126 (PLPPQQPPPPPPQ). The span at 127–141 (QLGSAASAPRTSTSS) shows a compositional bias: low complexity. Over residues 160–178 (YSTSVSSPHHTPKQESNAV) the composition is skewed to polar residues. Over residues 180 to 220 (ESFRPKLEQEDSKTKLDKREDSQSDIKCHGTKEEGDREITS) the composition is skewed to basic and acidic residues. The segment at residues 232–291 (PRKARTAFSDHQLNQLERSFERQKYLSVQDRMDLAAALNLTDTQVKTWYQNRRTKWKRQT) is a DNA-binding region (homeobox).

Belongs to the BAR homeobox family.

Its subcellular location is the nucleus. Potential regulator of neural basic helix-loop-helix genes. This is BarH-like 2 homeobox protein (BARHL2) from Homo sapiens (Human).